The chain runs to 442 residues: Pentatricopeptide repeat-containing protein At2g27800, mitochondrial (442 aa).

The transit peptide at 1 to 67 (MSATRSTFLG…SFLPSIHVRF (67 aa)) directs the protein to the mitochondrion. PPR repeat units lie at residues 206–236 (NENL…MVTS), 244–286 (TIRT…GIEP), 287–322 (DVFA…DCEP), 323–357 (NSFT…GFVP), 358–392 (NGKS…GRVV), and 393–427 (DFIS…QLVD).

It belongs to the PPR family. P subfamily.

It is found in the mitochondrion. The sequence is that of Pentatricopeptide repeat-containing protein At2g27800, mitochondrial from Arabidopsis thaliana (Mouse-ear cress).